The chain runs to 277 residues: 4-hydroxy-3-methylbut-2-enyl diphosphate reductase (277 aa).

C12 contacts [4Fe-4S] cluster. 2 residues coordinate (2E)-4-hydroxy-3-methylbut-2-enyl diphosphate: H36 and H70. Dimethylallyl diphosphate-binding residues include H36 and H70. Isopentenyl diphosphate contacts are provided by H36 and H70. Residue C92 coordinates [4Fe-4S] cluster. H120 serves as a coordination point for (2E)-4-hydroxy-3-methylbut-2-enyl diphosphate. H120 provides a ligand contact to dimethylallyl diphosphate. H120 is an isopentenyl diphosphate binding site. E122 acts as the Proton donor in catalysis. A (2E)-4-hydroxy-3-methylbut-2-enyl diphosphate-binding site is contributed by T158. Residue C186 coordinates [4Fe-4S] cluster. (2E)-4-hydroxy-3-methylbut-2-enyl diphosphate is bound by residues S214, N216, and S258. Dimethylallyl diphosphate-binding residues include S214, N216, and S258. Residues S214, N216, and S258 each contribute to the isopentenyl diphosphate site.

Belongs to the IspH family. The cofactor is [4Fe-4S] cluster.

It catalyses the reaction isopentenyl diphosphate + 2 oxidized [2Fe-2S]-[ferredoxin] + H2O = (2E)-4-hydroxy-3-methylbut-2-enyl diphosphate + 2 reduced [2Fe-2S]-[ferredoxin] + 2 H(+). It carries out the reaction dimethylallyl diphosphate + 2 oxidized [2Fe-2S]-[ferredoxin] + H2O = (2E)-4-hydroxy-3-methylbut-2-enyl diphosphate + 2 reduced [2Fe-2S]-[ferredoxin] + 2 H(+). It functions in the pathway isoprenoid biosynthesis; dimethylallyl diphosphate biosynthesis; dimethylallyl diphosphate from (2E)-4-hydroxy-3-methylbutenyl diphosphate: step 1/1. The protein operates within isoprenoid biosynthesis; isopentenyl diphosphate biosynthesis via DXP pathway; isopentenyl diphosphate from 1-deoxy-D-xylulose 5-phosphate: step 6/6. Functionally, catalyzes the conversion of 1-hydroxy-2-methyl-2-(E)-butenyl 4-diphosphate (HMBPP) into a mixture of isopentenyl diphosphate (IPP) and dimethylallyl diphosphate (DMAPP). Acts in the terminal step of the DOXP/MEP pathway for isoprenoid precursor biosynthesis. The protein is 4-hydroxy-3-methylbut-2-enyl diphosphate reductase of Campylobacter jejuni subsp. doylei (strain ATCC BAA-1458 / RM4099 / 269.97).